A 522-amino-acid chain; its full sequence is Peptide chain release factor 3 (522 aa).

Positions 10 to 277 constitute a tr-type G domain; that stretch reads ASRKTFAIIS…TFVDFAPAPS (268 aa). Residues 19-26, 87-91, and 141-144 contribute to the GTP site; these read SHPDAGKT, DTPGH, and NKMD.

Belongs to the TRAFAC class translation factor GTPase superfamily. Classic translation factor GTPase family. PrfC subfamily.

The protein resides in the cytoplasm. In terms of biological role, increases the formation of ribosomal termination complexes and stimulates activities of RF-1 and RF-2. It binds guanine nucleotides and has strong preference for UGA stop codons. It may interact directly with the ribosome. The stimulation of RF-1 and RF-2 is significantly reduced by GTP and GDP, but not by GMP. The protein is Peptide chain release factor 3 of Listeria monocytogenes serovar 1/2a (strain ATCC BAA-679 / EGD-e).